Reading from the N-terminus, the 414-residue chain is Enolase (414 aa).

Glutamine 162 contacts (2R)-2-phosphoglycerate. Residue glutamate 204 is the Proton donor of the active site. Aspartate 239, glutamate 280, and aspartate 307 together coordinate Mg(2+). 4 residues coordinate (2R)-2-phosphoglycerate: lysine 332, arginine 361, serine 362, and lysine 383. The Proton acceptor role is filled by lysine 332.

The protein belongs to the enolase family. Mg(2+) serves as cofactor.

It is found in the cytoplasm. Its subcellular location is the secreted. The protein localises to the cell surface. The catalysed reaction is (2R)-2-phosphoglycerate = phosphoenolpyruvate + H2O. It participates in carbohydrate degradation; glycolysis; pyruvate from D-glyceraldehyde 3-phosphate: step 4/5. Catalyzes the reversible conversion of 2-phosphoglycerate (2-PG) into phosphoenolpyruvate (PEP). It is essential for the degradation of carbohydrates via glycolysis. The protein is Enolase of Campylobacter jejuni (strain RM1221).